We begin with the raw amino-acid sequence, 78 residues long: Acyl carrier protein AcpP (78 aa).

Positions 2-77 (SDTAERVKKI…DAVKYIDKAS (76 aa)) constitute a Carrier domain. Serine 37 is subject to O-(pantetheine 4'-phosphoryl)serine.

This sequence belongs to the acyl carrier protein (ACP) family. Post-translationally, 4'-phosphopantetheine is transferred from CoA to a specific serine of apo-ACP by AcpS. This modification is essential for activity because fatty acids are bound in thioester linkage to the sulfhydryl of the prosthetic group.

It localises to the cytoplasm. It functions in the pathway lipid metabolism; fatty acid biosynthesis. Carrier of the growing fatty acid chain in fatty acid biosynthesis. This is Acyl carrier protein AcpP from Mesorhizobium japonicum (strain LMG 29417 / CECT 9101 / MAFF 303099) (Mesorhizobium loti (strain MAFF 303099)).